The sequence spans 392 residues: SH3 domain-binding protein 5-like (392 aa).

The tract at residues 1 to 57 (MADLKKAAGGRETPQGELRSEVVEDEGPRSPVAEEPGGSGSNSSETKLSPREEEELD) is disordered. Threonine 13 carries the phosphothreonine modification. Basic and acidic residues predominate over residues 18-28 (LRSEVVEDEGP). Residues serine 30 and serine 49 each carry the phosphoserine modification. 2 coiled-coil regions span residues 59–140 (RIQE…YERA) and 169–272 (WQEM…EQIH). The disordered stretch occupies residues 275 to 332 (RRGLPPHPLGPRRSSPVGAEAGPEGIEDGDSGIEGAEGGGLEEGSSLGPGPGPDTDTL). Residues 317–332 (EGSSLGPGPGPDTDTL) show a composition bias toward low complexity. Serine 342, serine 349, serine 357, serine 361, and serine 377 each carry phosphoserine. The interval 364–392 (GQELGAQSRGRRGSDIGVRGGRHQRSVSL) is disordered. The span at 383 to 392 (GGRHQRSVSL) shows a compositional bias: basic residues.

The protein belongs to the SH3BP5 family.

Functionally, functions as a guanine nucleotide exchange factor (GEF) for RAB11A. The protein is SH3 domain-binding protein 5-like (Sh3bp5l) of Mus musculus (Mouse).